The primary structure comprises 512 residues: 2-isopropylmalate synthase (512 aa).

The 263-residue stretch at 4–266 folds into the Pyruvate carboxyltransferase domain; it reads IQFFDTTLRD…ETNIVLNQFK (263 aa). 4 residues coordinate Mn(2+): D13, H201, H203, and N237. The segment at 390 to 512 is regulatory domain; it reads ELKHLQVQYV…SKQADFEEVK (123 aa).

The protein belongs to the alpha-IPM synthase/homocitrate synthase family. LeuA type 1 subfamily. As to quaternary structure, homodimer. Mn(2+) serves as cofactor.

The protein resides in the cytoplasm. The catalysed reaction is 3-methyl-2-oxobutanoate + acetyl-CoA + H2O = (2S)-2-isopropylmalate + CoA + H(+). The protein operates within amino-acid biosynthesis; L-leucine biosynthesis; L-leucine from 3-methyl-2-oxobutanoate: step 1/4. In terms of biological role, catalyzes the condensation of the acetyl group of acetyl-CoA with 3-methyl-2-oxobutanoate (2-ketoisovalerate) to form 3-carboxy-3-hydroxy-4-methylpentanoate (2-isopropylmalate). The protein is 2-isopropylmalate synthase of Listeria monocytogenes serotype 4a (strain HCC23).